Reading from the N-terminus, the 196-residue chain is Gastrula zinc finger protein xLCGF3.1 (196 aa).

7 consecutive C2H2-type zinc fingers follow at residues 6 to 28, 34 to 56, 62 to 84, 90 to 112, 118 to 140, 146 to 168, and 174 to 196; these read FMCT…HMTH, FTCT…QTIH, FTCI…YMTH, FTCT…QTMH, LTCT…QRVH, FTCT…QTVH, and FTCT…QIVH.

It belongs to the krueppel C2H2-type zinc-finger protein family.

The protein resides in the nucleus. In terms of biological role, may be involved in transcriptional regulation. This is Gastrula zinc finger protein xLCGF3.1 from Xenopus laevis (African clawed frog).